Here is a 264-residue protein sequence, read N- to C-terminus: Apolipoprotein A-I (264 aa).

The first 18 residues, 1-18 (MKTVVLAVAVLFLTGSQA), serve as a signal peptide directing secretion. Tandem repeats lie at residues 67-88 (LNLL…EQLG) and 89-110 (PVTQ…REMN). Positions 67 to 264 (LNLLENWDTL…EEASKKLNAQ (198 aa)) are 10 X approximate tandem repeats. Methionine sulfoxide is present on M109. Residues 111–121 (KDLEEVKAKVQ) form a 3; half-length repeat. 5 repeat units span residues 122 to 143 (PYLD…QKME), 144 to 165 (PLGA…EKLT), 166 to 187 (PLGE…TKMT), 188 to 207 (PYSD…LKDS), and 208 to 229 (PTLA…EKAK). Residue M193 is modified to Methionine sulfoxide. The 9; half-length repeat unit spans residues 230–240 (PALEDLRQGLM). M240 is modified (methionine sulfoxide). Copy 10 of the repeat occupies 241 to 264 (PVFESFKTRIMSMVEEASKKLNAQ).

It belongs to the apolipoprotein A1/A4/E family. As to quaternary structure, homodimer. Interacts with APOA1BP and CLU. Component of a sperm activating protein complex (SPAP), consisting of APOA1, an immunoglobulin heavy chain, an immunoglobulin light chain and albumin. Interacts with NDRG1. Interacts with SCGB3A2. Interacts with NAXE and YJEFN3. In terms of processing, glycosylated. Post-translationally, palmitoylated. Phosphorylation sites are present in the extracellular medium. Major protein of plasma HDL, also found in chylomicrons.

The protein resides in the secreted. Functionally, participates in the reverse transport of cholesterol from tissues to the liver for excretion by promoting cholesterol efflux from tissues and by acting as a cofactor for the lecithin cholesterol acyltransferase (LCAT). As part of the SPAP complex, activates spermatozoa motility. This Mesocricetus auratus (Golden hamster) protein is Apolipoprotein A-I (APOAI).